The chain runs to 347 residues: Probable ribonucleotide transport ATP-binding protein mkl (347 aa).

Residues 16-252 (IEVKGLTKSF…DEPVVRQFLN (237 aa)) enclose the ABC transporter domain. 48–55 (GPSGTGKS) provides a ligand contact to ATP.

This sequence belongs to the ABC transporter superfamily.

Not known, could be involved in the transport of ribonucleotides. This is Probable ribonucleotide transport ATP-binding protein mkl (mkl) from Mycobacterium leprae (strain TN).